Here is a 264-residue protein sequence, read N- to C-terminus: Major prion protein (264 aa).

A signal peptide spans 1-24; sequence MVKSHIGSWILVLFVAMWSDVGLC. Residues 25–241 are interaction with GRB2, ERI3 and SYN1; it reads KKRPKPGGGW…ESQAYYQRGA (217 aa). The interval 28 to 118 is disordered; it reads PKPGGGWNTG…QWNKPSKPKT (91 aa). 6 tandem repeats follow at residues 54 to 62, 63 to 70, 71 to 78, 79 to 86, 87 to 94, and 95 to 103. The 6 X 8 AA tandem repeats of P-H-G-G-G-W-G-Q stretch occupies residues 54-103; sequence PQGGGSWGQPHGGGWGQPHGGSWGQPHGGGWGQPHGGGWGQPHGGGGWGQ. Residues 55 to 107 are compositionally biased toward gly residues; that stretch reads QGGGSWGQPHGGGWGQPHGGSWGQPHGGGWGQPHGGGWGQPHGGGGWGQGGTH. 12 residues coordinate Cu(2+): His-72, Gly-73, Gly-74, His-80, Gly-81, Gly-82, His-88, Gly-89, Gly-90, His-96, Gly-98, and Gly-99. Cys-190 and Cys-225 form a disulfide bridge. 2 N-linked (GlcNAc...) asparagine glycosylation sites follow: Asn-192 and Asn-208. The GPI-anchor amidated alanine moiety is linked to residue Ala-241. A propeptide spans 242–264 (removed in mature form); it reads SVVLFSSPPVVLLISFLIFLIVG.

It belongs to the prion family. As to quaternary structure, monomer and homodimer. Has a tendency to aggregate into amyloid fibrils containing a cross-beta spine, formed by a steric zipper of superposed beta-strands. Soluble oligomers may represent an intermediate stage on the path to fibril formation. Copper binding may promote oligomerization. Interacts with GRB2, APP, ERI3/PRNPIP and SYN1. Mislocalized cytosolically exposed PrP interacts with MGRN1; this interaction alters MGRN1 subcellular location and causes lysosomal enlargement. Interacts with KIAA1191.

It localises to the cell membrane. The protein resides in the golgi apparatus. Functionally, its primary physiological function is unclear. Has cytoprotective activity against internal or environmental stresses. May play a role in neuronal development and synaptic plasticity. May be required for neuronal myelin sheath maintenance. May play a role in iron uptake and iron homeostasis. Soluble oligomers are toxic to cultured neuroblastoma cells and induce apoptosis (in vitro). Association with GPC1 (via its heparan sulfate chains) targets PRNP to lipid rafts. Also provides Cu(2+) or Zn(2+) for the ascorbate-mediated GPC1 deaminase degradation of its heparan sulfate side chains. The protein is Major prion protein (PRNP) of Boselaphus tragocamelus (Nilgai).